The chain runs to 83 residues: Cytochrome b559 subunit alpha (83 aa).

A helical membrane pass occupies residues 21 to 35 (VIHSITIPSLFVAGW). Residue His23 coordinates heme.

This sequence belongs to the PsbE/PsbF family. In terms of assembly, heterodimer of an alpha subunit and a beta subunit. PSII is composed of 1 copy each of membrane proteins PsbA, PsbB, PsbC, PsbD, PsbE, PsbF, PsbH, PsbI, PsbJ, PsbK, PsbL, PsbM, PsbT, PsbX, PsbY, PsbZ, Psb30/Ycf12, at least 3 peripheral proteins of the oxygen-evolving complex and a large number of cofactors. It forms dimeric complexes. Requires heme b as cofactor.

It is found in the plastid. The protein resides in the chloroplast thylakoid membrane. In terms of biological role, this b-type cytochrome is tightly associated with the reaction center of photosystem II (PSII). PSII is a light-driven water:plastoquinone oxidoreductase that uses light energy to abstract electrons from H(2)O, generating O(2) and a proton gradient subsequently used for ATP formation. It consists of a core antenna complex that captures photons, and an electron transfer chain that converts photonic excitation into a charge separation. This is Cytochrome b559 subunit alpha from Nephroselmis olivacea (Green alga).